The following is a 505-amino-acid chain: Lysine--tRNA ligase (505 aa).

The Mg(2+) site is built by Glu415 and Glu422.

This sequence belongs to the class-II aminoacyl-tRNA synthetase family. In terms of assembly, homodimer. It depends on Mg(2+) as a cofactor.

It localises to the cytoplasm. It catalyses the reaction tRNA(Lys) + L-lysine + ATP = L-lysyl-tRNA(Lys) + AMP + diphosphate. The sequence is that of Lysine--tRNA ligase from Shigella flexneri.